We begin with the raw amino-acid sequence, 316 residues long: Acetyl-coenzyme A carboxylase carboxyl transferase subunit alpha (316 aa).

The region spanning 39-293 is the CoA carboxyltransferase C-terminal domain; that stretch reads RLQDKSKALT…RGELLAQLKM (255 aa).

This sequence belongs to the AccA family. In terms of assembly, acetyl-CoA carboxylase is a heterohexamer composed of biotin carboxyl carrier protein (AccB), biotin carboxylase (AccC) and two subunits each of ACCase subunit alpha (AccA) and ACCase subunit beta (AccD).

The protein resides in the cytoplasm. It carries out the reaction N(6)-carboxybiotinyl-L-lysyl-[protein] + acetyl-CoA = N(6)-biotinyl-L-lysyl-[protein] + malonyl-CoA. Its pathway is lipid metabolism; malonyl-CoA biosynthesis; malonyl-CoA from acetyl-CoA: step 1/1. Its function is as follows. Component of the acetyl coenzyme A carboxylase (ACC) complex. First, biotin carboxylase catalyzes the carboxylation of biotin on its carrier protein (BCCP) and then the CO(2) group is transferred by the carboxyltransferase to acetyl-CoA to form malonyl-CoA. The protein is Acetyl-coenzyme A carboxylase carboxyl transferase subunit alpha of Pseudomonas aeruginosa (strain UCBPP-PA14).